Consider the following 98-residue polypeptide: Cytochrome c-552 (98 aa).

The N-terminal stretch at 1-18 is a signal peptide; sequence MKKFLLVAVVGLAGITFA. Heme c contacts are provided by cysteine 28, cysteine 31, histidine 32, and methionine 77.

The protein belongs to the cytochrome c family. Post-translationally, binds 1 heme c group covalently per subunit.

Reacts with hydrogenase. This is Cytochrome c-552 from Hydrogenobacter thermophilus (strain DSM 6534 / IAM 12695 / TK-6).